The primary structure comprises 194 residues: uncharacterized protein (194 aa).

2 disordered regions span residues M1–L21 and P73–S97. Pro residues predominate over residues P73–P96.

This is an uncharacterized protein from Mus musculus (Mouse).